The chain runs to 75 residues: Sec-independent protein translocase protein TatA (75 aa).

A helical transmembrane segment spans residues 1 to 21; it reads MGSMSIWHWIVVLAVVLLLFG. Positions 43–75 are disordered; that stretch reads MAEDDDAPAKPAEPPRAVPHQATPAPESEKKAV.

It belongs to the TatA/E family. As to quaternary structure, the Tat system comprises two distinct complexes: a TatABC complex, containing multiple copies of TatA, TatB and TatC subunits, and a separate TatA complex, containing only TatA subunits. Substrates initially bind to the TatABC complex, which probably triggers association of the separate TatA complex to form the active translocon.

It localises to the cell inner membrane. Part of the twin-arginine translocation (Tat) system that transports large folded proteins containing a characteristic twin-arginine motif in their signal peptide across membranes. TatA could form the protein-conducting channel of the Tat system. The chain is Sec-independent protein translocase protein TatA from Azorhizobium caulinodans (strain ATCC 43989 / DSM 5975 / JCM 20966 / LMG 6465 / NBRC 14845 / NCIMB 13405 / ORS 571).